The primary structure comprises 594 residues: Cationic amino acid transporter 1 (594 aa).

Position 2 is an N-acetylalanine (alanine 2). At 2 to 78 the chain is on the cytoplasmic side; sequence ASGGGDDGLR…EMKKTLTWWD (77 aa). The helical transmembrane segment at 79-99 threads the bilayer; that stretch reads LMWFGIGAVIGSGIFVLTGLE. Residues 100 to 104 are Extracellular-facing; it reads ARNHS. An N-linked (GlcNAc...) asparagine glycan is attached at asparagine 102. Residues 105-125 form a helical membrane-spanning segment; the sequence is GPAVVLSYVVSGVSAMLSVFC. Residues 126 to 149 are Cytoplasmic-facing; it reads YTEFAVEIPVAGGSFAYLRVELGD. A helical transmembrane segment spans residues 150–170; the sequence is FMAFIAAGNIILEYVVGGAAV. At 171 to 201 the chain is on the extracellular side; sequence ARSWTSYFATLLNHKPEDFRIIVHKLGEDYS. A helical membrane pass occupies residues 202–222; the sequence is HLDPIAVGVCAIICVLAVVGT. Topologically, residues 223–227 are cytoplasmic; sequence KGSSR. A helical transmembrane segment spans residues 228-248; that stretch reads FNYIASIIHMVVILFVIIAGF. Residues 249-266 are Extracellular-facing; the sequence is TKADVKNYSDFTPYGVRG. Residue asparagine 255 is glycosylated (N-linked (GlcNAc...) asparagine). A helical membrane pass occupies residues 267 to 287; the sequence is VFKSAAVLFFAYIGFDAVSTM. Over 288 to 297 the chain is Cytoplasmic; it reads AEETKNPGRD. The helical transmembrane segment at 298–318 threads the bilayer; that stretch reads IPIGLVGSMVVTTVCYCLMAV. Residues 319–348 are Extracellular-facing; the sequence is TLCLMQPYQQIDPDAPFSVAFSAVGWDWAK. Residues 349–369 traverse the membrane as a helical segment; that stretch reads YIVAFGALKGMTTVLLVGAIG. Over 370–393 the chain is Cytoplasmic; sequence QARYMTHIARAHMMPPWLAQVNAK. Residues 394-414 form a helical membrane-spanning segment; it reads TGTPINATVVMLAATALIAFF. Residues 415–418 are Extracellular-facing; the sequence is TKLK. A helical membrane pass occupies residues 419 to 439; it reads ILADLLSVSTLFIFMFVAVAL. The Cytoplasmic segment spans residues 440–457; sequence LVRRYYVTGETSTRDRNK. The helical transmembrane segment at 458–478 threads the bilayer; the sequence is FLVFLGLILASSTATAVYWAL. The Extracellular segment spans residues 479–483; that stretch reads EEEGW. The chain crosses the membrane as a helical span at residues 484–504; it reads IGYCITVPIWFLSTVAMKFLV. Residues 505 to 511 lie on the Cytoplasmic side of the membrane; it reads PQARAPK. Residues 512–532 traverse the membrane as a helical segment; sequence IWGVPLVPWLPSASIAINIFL. The Extracellular portion of the chain corresponds to 533 to 543; it reads LGSIDTKSFVR. A helical membrane pass occupies residues 544–564; it reads FAIWTGILLIYYVLFGLHATY. The Cytoplasmic segment spans residues 565 to 594; that stretch reads DTAKATLKEKQALQKAEEGGVVADNSCSAT.

Belongs to the amino acid-polyamine-organocation (APC) superfamily. Cationic amino acid transporter (CAT) (TC 2.A.3.3) family. Expressed in roots, stems, flowers, petioles, seeds, siliques, and leaves. Mostly present in major veins.

It is found in the membrane. With respect to regulation, inhibited by the protonophore 2,4-dinitrophenol. High-affinity permease involved in the transport of the cationic amino acids (e.g. arginine, lysine, histidine, citrulline, valine, and glutamate). Transport mostly basic amino acids, and, to a lower extent neutral and acidic amino acids. May function as a proton symporter. In Arabidopsis thaliana (Mouse-ear cress), this protein is Cationic amino acid transporter 1 (CAT1).